A 429-amino-acid chain; its full sequence is Zygotic gap protein knirps (429 aa).

The segment at residues 2-78 (NQTCKVCGEP…VGMSKGGSRY (77 aa)) is a DNA-binding region (nuclear receptor). NR C4-type zinc fingers lie at residues 5–25 (CKVC…CEGC) and 42–66 (CKNE…LRKC). The segment covering 112–126 (SVGGAPSASSPVGSP) has biased composition (low complexity). Disordered regions lie at residues 112–148 (SVGG…QQQQ), 223–250 (QSVD…SSAR), 338–357 (TSRS…QEVE), and 375–397 (SSSS…AEVK). Polar residues-rich tracts occupy residues 225–237 (VDSV…FSPA) and 338–349 (TSRSSVHSFNDS). Over residues 375-393 (SSSSSSHSAAHSPNTTTAH) the composition is skewed to low complexity.

It belongs to the nuclear hormone receptor family. NR0 subfamily.

The protein localises to the nucleus. In terms of biological role, transcriptional repressor. Binds to multiple sites in the eve stripe 3 enhancer element. Plays an essential role in the segmentation process both by refining the expression patterns of gap genes and by establishing pair-rules stripes of gene expression. The sequence is that of Zygotic gap protein knirps (kni) from Drosophila melanogaster (Fruit fly).